The following is a 181-amino-acid chain: ATP synthase subunit delta (181 aa).

Belongs to the ATPase delta chain family. F-type ATPases have 2 components, F(1) - the catalytic core - and F(0) - the membrane proton channel. F(1) has five subunits: alpha(3), beta(3), gamma(1), delta(1), epsilon(1). F(0) has three main subunits: a(1), b(2) and c(10-14). The alpha and beta chains form an alternating ring which encloses part of the gamma chain. F(1) is attached to F(0) by a central stalk formed by the gamma and epsilon chains, while a peripheral stalk is formed by the delta and b chains.

It is found in the cell inner membrane. In terms of biological role, f(1)F(0) ATP synthase produces ATP from ADP in the presence of a proton or sodium gradient. F-type ATPases consist of two structural domains, F(1) containing the extramembraneous catalytic core and F(0) containing the membrane proton channel, linked together by a central stalk and a peripheral stalk. During catalysis, ATP synthesis in the catalytic domain of F(1) is coupled via a rotary mechanism of the central stalk subunits to proton translocation. This protein is part of the stalk that links CF(0) to CF(1). It either transmits conformational changes from CF(0) to CF(1) or is implicated in proton conduction. In Chlorobium phaeobacteroides (strain DSM 266 / SMG 266 / 2430), this protein is ATP synthase subunit delta.